We begin with the raw amino-acid sequence, 957 residues long: SH3 domain-binding protein 4-A (957 aa).

Positions 54–113 (ENVKEVVAIKDYCPNNFTTLKFSKGEHLYVLDASGGDWWYAHNSTEMGYIPSSYVQPLNY) constitute an SH3 1 domain. One can recognise a ZU5 domain in the interval 312–449 (TSIVCRLDSS…LEPVMYVVMV (138 aa)). In terms of domain architecture, SH3 2 spans 649–719 (TSLKYGKLLK…HAKNVLVVGK (71 aa)).

In terms of assembly, homodimer or homooligomer.

It localises to the membrane. It is found in the clathrin-coated pit. Its subcellular location is the cytoplasmic vesicle. The protein localises to the clathrin-coated vesicle. The protein resides in the nucleus. Functionally, possible role in regulating endocytosis of the transferrin receptor at the plasma membrane. Alternatively, may function as a negative regulator of the amino acid-induced TOR signaling by inhibiting the formation of active Rag GTPase complexes. Preferentially binds inactive Rag GTPase complexes and prevents their interaction with the mTORC1 complex inhibiting its relocalization to lysosomes and its activation. Thereby, may indirectly regulate cell growth, proliferation and autophagy. The polypeptide is SH3 domain-binding protein 4-A (sh3bp4-a) (Xenopus laevis (African clawed frog)).